We begin with the raw amino-acid sequence, 198 residues long: MAKVLVLYYSMYGHIETMARAVAEGASKVDGAEVVVKRVPETMPPQLFEKAGGKTQTAPVATPQELADYDAIIFGTPTRFGNMSGQMRTFLDQTGGLWASGALYGKLASVFSSTGTGGGQEQTITSTWTTLAHHGMVIVPIGYAAQELFDVSQVRGGTPYGATTIAGGDGSRQPSQEELSIARYQGEYVAGLAVKLNG.

Residues 4-189 form the Flavodoxin-like domain; it reads VLVLYYSMYG…SIARYQGEYV (186 aa). Residues 10–15 and 78–80 each bind FMN; these read SMYGHI and TRF. An NAD(+)-binding site is contributed by Tyr12. Trp98 lines the substrate pocket. Residues 113-118 and His133 each bind FMN; that span reads STGTGG.

Belongs to the WrbA family. It depends on FMN as a cofactor.

It catalyses the reaction a quinone + NADH + H(+) = a quinol + NAD(+). The enzyme catalyses a quinone + NADPH + H(+) = a quinol + NADP(+). This chain is NAD(P)H dehydrogenase (quinone), found in Escherichia coli (strain SE11).